The following is a 393-amino-acid chain: Formate-dependent phosphoribosylglycinamide formyltransferase (393 aa).

Residues 22–23 and Glu-82 each bind N(1)-(5-phospho-beta-D-ribosyl)glycinamide; that span reads EL. Residues Arg-114, Lys-155, 160 to 165, 195 to 198, and Glu-203 each bind ATP; these read SSGHGQ and EGFV. Residues 119 to 308 form the ATP-grasp domain; it reads RLAAEKLKLP…EFALHARAIL (190 aa). The Mg(2+) site is built by Glu-267 and Glu-279. N(1)-(5-phospho-beta-D-ribosyl)glycinamide is bound by residues Asp-286, Lys-356, and 363-364; that span reads RR.

The protein belongs to the PurK/PurT family. Homodimer.

The enzyme catalyses N(1)-(5-phospho-beta-D-ribosyl)glycinamide + formate + ATP = N(2)-formyl-N(1)-(5-phospho-beta-D-ribosyl)glycinamide + ADP + phosphate + H(+). Its pathway is purine metabolism; IMP biosynthesis via de novo pathway; N(2)-formyl-N(1)-(5-phospho-D-ribosyl)glycinamide from N(1)-(5-phospho-D-ribosyl)glycinamide (formate route): step 1/1. Functionally, involved in the de novo purine biosynthesis. Catalyzes the transfer of formate to 5-phospho-ribosyl-glycinamide (GAR), producing 5-phospho-ribosyl-N-formylglycinamide (FGAR). Formate is provided by PurU via hydrolysis of 10-formyl-tetrahydrofolate. This chain is Formate-dependent phosphoribosylglycinamide formyltransferase, found in Histophilus somni (strain 129Pt) (Haemophilus somnus).